A 140-amino-acid chain; its full sequence is Myrosinase 2 (140 aa).

The active-site Nucleophile is Arg-70. N-linked (GlcNAc...) asparagine glycosylation is found at Asn-114 and Asn-127.

The protein belongs to the glycosyl hydrolase 1 family. Homodimer.

The catalysed reaction is a thioglucoside + H2O = a sugar + a thiol.. Its activity is regulated as follows. Inhibited by ascorbate. Degradation of glucosinolates (glucose residue linked by a thioglucoside bound to an amino acid derivative) to glucose, sulfate and any of the products: thiocyanates, isothiocyanates, nitriles, epithionitriles or oxazolidine-2-thiones. The protein is Myrosinase 2 of Brevicoryne brassicae (Mealy cabbage aphid).